The sequence spans 427 residues: Putative acyl-CoA thioester hydrolase YbhC (427 aa).

Residues 1-21 (MNTFSVSRLALALAFGVTLTA) form the signal peptide. Cys22 is lipidated: N-palmitoyl cysteine. Residue Cys22 is the site of S-diacylglycerol cysteine attachment. Positions 23-42 (SSTPPDQRPSDQTAPGTSSR) are disordered. A disulfide bridge links Cys185 with Cys197. The Nucleophile role is filled by Asp285. Arg345 contacts substrate.

Belongs to the pectinesterase family.

The protein resides in the cell outer membrane. In terms of biological role, putative thioesterase. Does not bind pectin, and has no pectinesterase activity. The chain is Putative acyl-CoA thioester hydrolase YbhC (ybhC) from Escherichia coli (strain K12).